A 610-amino-acid polypeptide reads, in one-letter code: tRNA uridine 5-carboxymethylaminomethyl modification enzyme MnmG (610 aa).

Residue 14–19 (GAGHAG) participates in FAD binding. 274-288 (GPRYCPSIEDKIVKF) provides a ligand contact to NAD(+).

It belongs to the MnmG family. As to quaternary structure, homodimer. Heterotetramer of two MnmE and two MnmG subunits. It depends on FAD as a cofactor.

It is found in the cytoplasm. Functionally, NAD-binding protein involved in the addition of a carboxymethylaminomethyl (cmnm) group at the wobble position (U34) of certain tRNAs, forming tRNA-cmnm(5)s(2)U34. The chain is tRNA uridine 5-carboxymethylaminomethyl modification enzyme MnmG from Chlamydia trachomatis serovar A (strain ATCC VR-571B / DSM 19440 / HAR-13).